Reading from the N-terminus, the 81-residue chain is Defensin-like protein 313 (81 aa).

The signal sequence occupies residues 1–32 (MESKRSSSSPLLILITTIMIIFIISGPKSVDA). 3 disulfides stabilise this stretch: C34-C63, C45-C74, and C49-C76.

This sequence belongs to the DEFL family.

It localises to the secreted. The polypeptide is Defensin-like protein 313 (Arabidopsis thaliana (Mouse-ear cress)).